We begin with the raw amino-acid sequence, 224 residues long: Menaquinol:cytochrome c reductase cytochrome b subunit (224 aa).

Residues 37–57 (FSAFVYCFGGLTFFVTVIQVL) traverse the membrane as a helical segment. A heme b-binding site is contributed by Tyr42. Residue Cys43 participates in heme c binding. The heme b site is built by Arg91, His94, His108, and Arg111. 3 helical membrane passes run 96 to 116 (WGAS…FFQG), 126 to 146 (WIVG…GYLL), and 195 to 215 (IHVF…FIMI). Residues His196 and His211 each contribute to the heme b site. Heme c-binding residues include Arg216 and Ile220. Ser221 is a heme b binding site.

It belongs to the cytochrome b family. In terms of assembly, the main subunits of the menaquinol:cytochrome c complex are a Rieske-type iron-sulfur protein (QcrA), a cytochrome b (QcrB) and a cytochrome c (QcrC). Heme b is required as a cofactor. Heme c serves as cofactor.

The protein localises to the cell membrane. Functionally, component of the menaquinol:cytochrome c reductase complex. The sequence is that of Menaquinol:cytochrome c reductase cytochrome b subunit from Bacillus subtilis (strain 168).